A 156-amino-acid polypeptide reads, in one-letter code: Movement protein P17 (156 aa).

Residues Ala38–Phe54 form a homodimerization region. Positions Asp57 to Gly156 are RNA-binding. A phosphoserine mark is found at Ser71, Ser79, Ser137, and Ser140. The disordered stretch occupies residues Ala106–Gly156. Positions Lys144–Gly156 are enriched in basic residues.

This sequence belongs to the polerovirus movement protein family. In terms of assembly, homodimer. Post-translationally, expressed as a nonphosphorylated 20kDa form and a phosphorylated 22kDa form. Phosphorylated by a host PKC-related kinase. Serine phosphorylation is required for plamodesma targeting.

It is found in the host cell junction. It localises to the host plasmodesma. Its subcellular location is the host chloroplast envelope. The protein resides in the host Golgi apparatus. The protein localises to the host mitochondrion outer membrane. In terms of biological role, together with movement protein P3a, facilitates long-distance movement of virions in host. Transports viral genome to neighboring plant cells directly through plasmosdesmata, without any budding. The movement protein allows efficient cell to cell propagation, by bypassing the host cell wall barrier. Binds ssRNA. The protein is Movement protein P17 of Solanum tuberosum (Potato).